The following is a 267-amino-acid chain: uncharacterized protein (267 aa).

The interval 1-55 (MTEERKETFEEEINQSERIDADEEPLSRMSRKASRQSKQKQKQKQKPRQERGEST) is disordered. Positions 9-24 (FEEEINQSERIDADEE) are enriched in acidic residues. Residues 29-46 (MSRKASRQSKQKQKQKQK) show a composition bias toward basic residues. 5 helical membrane passes run 93–115 (YKYGLISMLIFSIIFSIGNWFQL), 135–157 (GFLVVLVYLLIFFAVMVFAIWAV), 173–195 (AVLGSLLVPVIAVSILWLIFAIV), 199–221 (MLTVLFTVLILFSIFFIIALYVQ), and 234–256 (YIYCVFAVVAIALLFTAVTWPFI).

It localises to the cell membrane. This is an uncharacterized protein from Bacillus subtilis (strain 168).